Reading from the N-terminus, the 510-residue chain is Flavonoid 3',5'-hydroxylase (510 aa).

Position 447 (C447) interacts with heme.

The protein belongs to the cytochrome P450 family. Requires heme as cofactor.

The enzyme catalyses a 3',5'-unsubstituted flavanone + 2 reduced [NADPH--hemoprotein reductase] + 2 O2 = a 3',5'-dihydroxyflavanone + 2 oxidized [NADPH--hemoprotein reductase] + 2 H2O + 2 H(+). The protein operates within pigment biosynthesis; anthocyanin biosynthesis. Functionally, catalyzes the 3'5'-hydroxylation of naringenin and eriodictyol to form 5,7,3,'4',5'-pentahydroxyflavanone and 3',5'-hydroxylation of dihydrokaempferol and dihydroquercetin to form dihydromyricetin. The sequence is that of Flavonoid 3',5'-hydroxylase (CYP75A7) from Eustoma exaltatum subsp. russellianum (Bluebells).